We begin with the raw amino-acid sequence, 163 residues long: Cytochrome c-type biogenesis protein CcmE (163 aa).

The Cytoplasmic segment spans residues 1–7 (MTRKQRR). Residues 8-28 (LVFIGTCGAVLAVALGLVLWA) form a helical; Signal-anchor for type II membrane protein membrane-spanning segment. The Periplasmic segment spans residues 29–163 (MSGTIVFFRS…RTASGEARAP (135 aa)). Heme contacts are provided by His122 and Tyr126. The interval 134–163 (ALKKSGRWQEGAGHPAPAPPRTASGEARAP) is disordered.

Belongs to the CcmE/CycJ family.

The protein resides in the cell inner membrane. Functionally, heme chaperone required for the biogenesis of c-type cytochromes. Transiently binds heme delivered by CcmC and transfers the heme to apo-cytochromes in a process facilitated by CcmF and CcmH. The protein is Cytochrome c-type biogenesis protein CcmE of Methylobacterium sp. (strain 4-46).